Consider the following 171-residue polypeptide: Co-chaperone protein HscB homolog (171 aa).

Positions 2–74 constitute a J domain; that stretch reads NHFELFGLPN…VTRAEYILSE (73 aa).

This sequence belongs to the HscB family. In terms of assembly, interacts with HscA and stimulates its ATPase activity.

Its function is as follows. Co-chaperone involved in the maturation of iron-sulfur cluster-containing proteins. Seems to help targeting proteins to be folded toward HscA. The sequence is that of Co-chaperone protein HscB homolog from Aliivibrio salmonicida (strain LFI1238) (Vibrio salmonicida (strain LFI1238)).